Consider the following 515-residue polypeptide: Heavy metal-associated isoprenylated plant protein 41 (515 aa).

The HMA domain occupies K376 to V444. The residue at position 512 (C512) is a Cysteine methyl ester. Residue C512 is the site of S-farnesyl cysteine attachment. Residues R513–L515 constitute a propeptide, removed in mature form.

Belongs to the HIPP family.

In terms of biological role, heavy-metal-binding protein. The chain is Heavy metal-associated isoprenylated plant protein 41 from Arabidopsis thaliana (Mouse-ear cress).